A 290-amino-acid polypeptide reads, in one-letter code: MEDKEGRFRVECIENVHYVTDMFCKYPLKLIAPKTKLDFSILYIMSYGGGLVSGDRVALDIIVGKNATLCIQSQGNTKLYKQIPGKPATQQKLDVEVGTNALCLLLQDPVQPFGDSNYIQTQNFVLEDETSSLALLDWTLHGRSHINEQWSMRSYVSKNCIQMKIPASNQRKTLLRDVLKIFDEPNLHIGLKAERMHHFECIGNLYLIGPKFLKTKEAVLNQYRNKEKRISKTTDSSQMKKIIWTACEIRSVTIIKFAAYNTETARNFLLKLFSDYASFLDHETLRAFWY.

Belongs to the UreD family.

It localises to the cytoplasm. The protein localises to the nucleus. Functionally, probably facilitates nickel incorporation. This is an uncharacterized protein from Schizosaccharomyces pombe (strain 972 / ATCC 24843) (Fission yeast).